Here is a 178-residue protein sequence, read N- to C-terminus: DNA-directed RNA polymerase V subunit 7 (178 aa).

Belongs to the eukaryotic RPB7/RPC8 RNA polymerase subunit family. As to quaternary structure, component of the RNA polymerase V complex.

The protein resides in the nucleus. In terms of biological role, DNA-dependent RNA polymerase catalyzes the transcription of DNA into RNA using the four ribonucleoside triphosphates as substrates. Component of RNA polymerase V involved in RNA-directed DNA methylation-dependent (RdDM) silencing of endogenous repeated sequences, including transposable elements. In Arabidopsis thaliana (Mouse-ear cress), this protein is DNA-directed RNA polymerase V subunit 7 (NRPE7).